The chain runs to 125 residues: Cyclin-dependent protein kinase inhibitor SMR16 (125 aa).

Probable cyclin-dependent protein kinase (CDK) inhibitor that functions as a repressor of mitosis in the endoreduplication cell cycle. The sequence is that of Cyclin-dependent protein kinase inhibitor SMR16 from Arabidopsis thaliana (Mouse-ear cress).